The chain runs to 880 residues: MDNKNISTTYNPKEFEERLYSNWQEKKYFTPVIDKSKKPYTIIMPPPNITGKLHLGHALDNTLQDMLIRFKRMQGYCTLWLPGQDHASIATEVKVENELLKEGLYKKEMGREAFLEKVWEWTDEYRERIREQLKKMGCSADFTREAFTMDENLSKAVRHVFVKLYKEGLIYQGNRITNWCPKCQTALSDAEIEYEEKEGNFWHIKYPVVGSEEFLEIATTRPETLLGDSAVAVNPSDERYAHLVGKMLKLPLTDREIPVIADDYVDVEFGTGAVKITPAHDPNDFEVGKRHNLPQIRVMDDSGVINHLGGKYKGLDRYEARKQMVADLEELGLLVKIKPHTHNVGTHDRCGTVVEPIISKQWYVKMQSLADPAIEVVRNKGTKFVPERFEKTYFNWMENIQDWCISRQLWWGHRIPVFYCKDCGEIMVELEDPTKCCKCGSENIEQDKDVLDTWFSSALWPFSTLGWPDRTDDLEFFYPTSTLVTGYDIIFFWVARMIFSGIHNMGETPFDTVLIHGIIRDAQGRKMSKSLGNGVDPLEVIDEYGADALRFMLVTGNAPGNDIRYIPERVEAARNFANKIWNASRFVMMNLDRELMDKYKDCQEYSLADQWILSRTNSLIKEVTENMEKYELGIALQKVHDFLWTEFCDYYIELVKPVLYGDDEKAKGVVFNVLYTVLNTGLKLLHPVMPFITEEIYTHLSTETESITIATWPTYDEALNNEKAEKDMTFIMEAIRSLRNLRAEMNVPPSRKAKVMAYASEEAKDAFINGGAYLEKLASASEVTFLDNKDNLDNNLVSVVVKGGELFLPLLDLVDREKELERLNKEKTKLEGEILRVEKKLSNERFVSKAPEAVVNEERAKGVKYKEMLEAVLERIEALQ.

The 'HIGH' region motif lies at 47 to 57 (PNITGKLHLGH). The 'KMSKS' region motif lies at 526–530 (KMSKS). Lys-529 serves as a coordination point for ATP. Positions 810 to 845 (LLDLVDREKELERLNKEKTKLEGEILRVEKKLSNER) form a coiled coil.

The protein belongs to the class-I aminoacyl-tRNA synthetase family. ValS type 1 subfamily. In terms of assembly, monomer.

The protein localises to the cytoplasm. It catalyses the reaction tRNA(Val) + L-valine + ATP = L-valyl-tRNA(Val) + AMP + diphosphate. In terms of biological role, catalyzes the attachment of valine to tRNA(Val). As ValRS can inadvertently accommodate and process structurally similar amino acids such as threonine, to avoid such errors, it has a 'posttransfer' editing activity that hydrolyzes mischarged Thr-tRNA(Val) in a tRNA-dependent manner. The protein is Valine--tRNA ligase of Clostridium perfringens (strain 13 / Type A).